Here is a 450-residue protein sequence, read N- to C-terminus: Asparagine--tRNA ligase (450 aa).

Belongs to the class-II aminoacyl-tRNA synthetase family. In terms of assembly, homodimer.

It is found in the cytoplasm. The enzyme catalyses tRNA(Asn) + L-asparagine + ATP = L-asparaginyl-tRNA(Asn) + AMP + diphosphate + H(+). This Metamycoplasma arthritidis (strain 158L3-1) (Mycoplasma arthritidis) protein is Asparagine--tRNA ligase.